The chain runs to 280 residues: Shikimate dehydrogenase (NADP(+)) (280 aa).

Shikimate is bound by residues Ser19–Ser21 and Thr66. The active-site Proton acceptor is the Lys70. Glu82 is a binding site for NADP(+). Asn91 and Asp106 together coordinate shikimate. Residues Gly130–Ala134 and Leu222 each bind NADP(+). Tyr224 is a shikimate binding site. Position 245 (Gly245) interacts with NADP(+).

Belongs to the shikimate dehydrogenase family. Homodimer.

The catalysed reaction is shikimate + NADP(+) = 3-dehydroshikimate + NADPH + H(+). The protein operates within metabolic intermediate biosynthesis; chorismate biosynthesis; chorismate from D-erythrose 4-phosphate and phosphoenolpyruvate: step 4/7. In terms of biological role, involved in the biosynthesis of the chorismate, which leads to the biosynthesis of aromatic amino acids. Catalyzes the reversible NADPH linked reduction of 3-dehydroshikimate (DHSA) to yield shikimate (SA). The polypeptide is Shikimate dehydrogenase (NADP(+)) (Methanococcus maripaludis (strain C7 / ATCC BAA-1331)).